Here is a 117-residue protein sequence, read N- to C-terminus: Large ribosomal subunit protein uL18 (117 aa).

Belongs to the universal ribosomal protein uL18 family. In terms of assembly, part of the 50S ribosomal subunit; part of the 5S rRNA/L5/L18/L25 subcomplex. Contacts the 5S and 23S rRNAs.

Functionally, this is one of the proteins that bind and probably mediate the attachment of the 5S RNA into the large ribosomal subunit, where it forms part of the central protuberance. The chain is Large ribosomal subunit protein uL18 from Vibrio atlanticus (strain LGP32) (Vibrio splendidus (strain Mel32)).